Reading from the N-terminus, the 834-residue chain is Pentatricopeptide repeat-containing protein At4g39530 (834 aa).

PPR repeat units lie at residues 78-112 (DTYL…NLVS), 113-144 (WSTM…KDSP), 145-181 (NEYI…GFDR), 182-212 (DVYV…LPEK), 213-247 (STVT…NVVP), 248-282 (DGYI…GLEM), 283-313 (DASL…MPNK), 314-348 (NIIS…GLKP), 349-383 (DMYA…NLGN), 384-414 (DSYV…FAAA), 415-452 (DVVL…LIRP), 453-487 (SLLT…GLNL), 488-518 (DIFA…MKVK), 519-553 (DLVI…RERP), 554-588 (DEFT…GLEC), 589-619 (NPYI…AASR), 620-654 (DVVC…GIEP), 655-689 (NYIT…GIEP), and 690-720 (ETEH…MPTK). Residues 725-800 (VWRSLLSGCA…EPGRSWIGIN (76 aa)) form a type E motif region. A type E(+) motif region spans residues 801 to 831 (KEVHIFLSKDKSHCKANQIYEVLDDLLVQIR).

The protein belongs to the PPR family. PCMP-E subfamily.

The polypeptide is Pentatricopeptide repeat-containing protein At4g39530 (PCMP-E52) (Arabidopsis thaliana (Mouse-ear cress)).